Consider the following 141-residue polypeptide: ATP synthase epsilon chain (141 aa).

It belongs to the ATPase epsilon chain family. As to quaternary structure, F-type ATPases have 2 components, CF(1) - the catalytic core - and CF(0) - the membrane proton channel. CF(1) has five subunits: alpha(3), beta(3), gamma(1), delta(1), epsilon(1). CF(0) has three main subunits: a, b and c.

It localises to the cell inner membrane. Produces ATP from ADP in the presence of a proton gradient across the membrane. The sequence is that of ATP synthase epsilon chain from Desulfatibacillum aliphaticivorans.